A 447-amino-acid chain; its full sequence is CBL-interacting serine/threonine-protein kinase 9 (447 aa).

A Protein kinase domain is found at 19-274 (YEMGRTLGEG…IAELLEDEWF (256 aa)). Residues 25–33 (LGEGSFAKV) and Lys48 each bind ATP. Asp142 acts as the Proton acceptor in catalysis. The activation loop stretch occupies residues 160–189 (DFGLSAFSRQVREDGLLHTACGTPNYVAPE). Ser164 carries the phosphoserine modification. Residue Thr178 is modified to Phosphothreonine. One can recognise an NAF domain in the interval 312-336 (EKPVSMNAFELISSSSEFSLENLFE). The tract at residues 343–372 (KKETRFTSQRSASEIMSKMEETAKPLGFNV) is PPI.

Belongs to the protein kinase superfamily. CAMK Ser/Thr protein kinase family. SNF1 subfamily. As to quaternary structure, interacts with CBL2 and CBL3. The cofactor is Mn(2+). Expressed at low levels in roots and shoots. Detected in root vascular bundles and in the leaf vascular tissue and hydathode, but not in root tips.

It is found in the cytoplasm. The protein resides in the nucleus. The catalysed reaction is L-seryl-[protein] + ATP = O-phospho-L-seryl-[protein] + ADP + H(+). It catalyses the reaction L-threonyl-[protein] + ATP = O-phospho-L-threonyl-[protein] + ADP + H(+). CIPK serine-threonine protein kinases interact with CBL proteins. Binding of a CBL protein to the regulatory NAF domain of CIPK protein lead to the activation of the kinase in a calcium-dependent manner. Involved in K(+) homeostasis under low-K(+) stress. The sequence is that of CBL-interacting serine/threonine-protein kinase 9 (CIPK9) from Arabidopsis thaliana (Mouse-ear cress).